The chain runs to 429 residues: Enolase (429 aa).

Gln163 contributes to the (2R)-2-phosphoglycerate binding site. Glu205 serves as the catalytic Proton donor. Positions 242, 285, and 312 each coordinate Mg(2+). (2R)-2-phosphoglycerate contacts are provided by Lys337, Arg366, Ser367, and Lys388. Lys337 serves as the catalytic Proton acceptor.

The protein belongs to the enolase family. Mg(2+) is required as a cofactor.

It localises to the cytoplasm. Its subcellular location is the secreted. The protein resides in the cell surface. It catalyses the reaction (2R)-2-phosphoglycerate = phosphoenolpyruvate + H2O. Its pathway is carbohydrate degradation; glycolysis; pyruvate from D-glyceraldehyde 3-phosphate: step 4/5. Catalyzes the reversible conversion of 2-phosphoglycerate (2-PG) into phosphoenolpyruvate (PEP). It is essential for the degradation of carbohydrates via glycolysis. This Oceanobacillus iheyensis (strain DSM 14371 / CIP 107618 / JCM 11309 / KCTC 3954 / HTE831) protein is Enolase.